The chain runs to 72 residues: Protein SlyX homolog (72 aa).

The segment at Lys53–Tyr72 is disordered.

This sequence belongs to the SlyX family.

This is Protein SlyX homolog from Marinobacter nauticus (strain ATCC 700491 / DSM 11845 / VT8) (Marinobacter aquaeolei).